Reading from the N-terminus, the 528-residue chain is GMP synthase [glutamine-hydrolyzing] (528 aa).

The region spanning 13–204 (AIVILDFGSQ…VYDICSCEPD (192 aa)) is the Glutamine amidotransferase type-1 domain. Catalysis depends on cysteine 90, which acts as the Nucleophile. Residues histidine 178 and glutamate 180 contribute to the active site. One can recognise a GMPS ATP-PPase domain in the interval 205 to 403 (WTTNLFIDEA…LGLPDEIVRR (199 aa)). Position 232 to 238 (232 to 238 (SGGVDSS)) interacts with ATP.

Homodimer.

It catalyses the reaction XMP + L-glutamine + ATP + H2O = GMP + L-glutamate + AMP + diphosphate + 2 H(+). Its pathway is purine metabolism; GMP biosynthesis; GMP from XMP (L-Gln route): step 1/1. Its function is as follows. Catalyzes the synthesis of GMP from XMP. This chain is GMP synthase [glutamine-hydrolyzing], found in Prochlorococcus marinus (strain NATL2A).